The sequence spans 269 residues: 5'-nucleotidase SurE (269 aa).

A divalent metal cation-binding residues include D11, D12, S43, and N101.

Belongs to the SurE nucleotidase family. A divalent metal cation serves as cofactor.

The protein localises to the cytoplasm. It carries out the reaction a ribonucleoside 5'-phosphate + H2O = a ribonucleoside + phosphate. Its function is as follows. Nucleotidase that shows phosphatase activity on nucleoside 5'-monophosphates. The polypeptide is 5'-nucleotidase SurE (Prochlorococcus marinus (strain MIT 9211)).